We begin with the raw amino-acid sequence, 207 residues long: MKFNATARSVQGSSASRRLRRAGRVPAIVYGGSAAPLNIELDHNEIYHALRKEEFHASILQMQLDGKEEAVLLRSVQWHAYKPQVLHVDFQRVDANQALHTKVPLHFINGENSPAVKLSSAIISHVVTELEITCLPAALPQYIEVDLGNLLGGGSVHLSDVKLPKGVTYVAHGSDANPVLASALVKGGGAAAADEGGDAAAAETPAA.

This sequence belongs to the bacterial ribosomal protein bL25 family. CTC subfamily. In terms of assembly, part of the 50S ribosomal subunit; part of the 5S rRNA/L5/L18/L25 subcomplex. Contacts the 5S rRNA. Binds to the 5S rRNA independently of L5 and L18.

Its function is as follows. This is one of the proteins that binds to the 5S RNA in the ribosome where it forms part of the central protuberance. This is Large ribosomal subunit protein bL25 from Bordetella petrii (strain ATCC BAA-461 / DSM 12804 / CCUG 43448).